The chain runs to 352 residues: Protein Wnt-2 (352 aa).

Residues Met-1–Ser-23 form the signal peptide. 11 cysteine pairs are disulfide-bonded: Cys-65–Cys-76, Cys-115–Cys-123, Cys-125–Cys-148, Cys-196–Cys-210, Cys-198–Cys-205, Cys-281–Cys-312, Cys-297–Cys-307, Cys-311–Cys-351, Cys-327–Cys-342, Cys-329–Cys-339, and Cys-334–Cys-335. N-linked (GlcNAc...) asparagine glycosylation is found at Asn-75 and Asn-119. Residue Ser-202 is the site of O-palmitoleoyl serine; by PORCN attachment.

This sequence belongs to the Wnt family. In terms of processing, palmitoleoylated by porcupine. The lipid group functions as a sorting signal, targeting the ligand to polarized vesicles that transport Wnt2 to unique sites at the cell surface. Depalmitoleoylated by notum, leading to inhibit Wnt signaling pathway. As to expression, dynamic expression pattern during embryogenesis. Expression is predominantly segmented, with expression also seen in the limb primordia and presumptive gonads. In embryonic tracheal cells, expression is close to and dorsal to the tracheal placode.

Its subcellular location is the secreted. The protein resides in the extracellular space. It localises to the extracellular matrix. Its function is as follows. Binds as a ligand to a family of frizzled seven-transmembrane receptors and acts through a cascade of genes on the nucleus. Segment polarity protein. May function in gonadogenesis and limb development. Wg and Wnt2 have a role in the developing trachea and together are responsible for all dorsal trunk formation. This is Protein Wnt-2 (Wnt2) from Drosophila melanogaster (Fruit fly).